Reading from the N-terminus, the 254-residue chain is Small ribosomal subunit protein uS2 (254 aa).

Residues 228 to 254 (DRGAEKEVEAAEEAPAAEAEAAPATEE) form a disordered region. Residues 240–254 (EAPAAEAEAAPATEE) show a composition bias toward low complexity.

Belongs to the universal ribosomal protein uS2 family.

This chain is Small ribosomal subunit protein uS2, found in Flavobacterium johnsoniae (strain ATCC 17061 / DSM 2064 / JCM 8514 / BCRC 14874 / CCUG 350202 / NBRC 14942 / NCIMB 11054 / UW101) (Cytophaga johnsonae).